Reading from the N-terminus, the 141-residue chain is Hemoglobin subunit alpha-A (141 aa).

One can recognise a Globin domain in the interval 1–141 (VLSGSDKTNV…VGNVLTAKYR (141 aa)). Histidine 58 contributes to the O2 binding site. Histidine 87 provides a ligand contact to heme b.

Belongs to the globin family. Heterotetramer of two alpha chains and two beta chains. Red blood cells.

In terms of biological role, involved in oxygen transport from the lung to the various peripheral tissues. The polypeptide is Hemoglobin subunit alpha-A (HBAA) (Vultur gryphus (Andean condor)).